The primary structure comprises 305 residues: 2-pyrone-4,6-dicarbaxylate hydrolase (305 aa).

Substrate contacts are provided by residues 32 to 34 (HCH), Tyr-50, Thr-78, Arg-125, Arg-131, Tyr-158, and His-182. Asp-258 serves as the catalytic Proton acceptor. Asn-263 lines the substrate pocket.

The protein belongs to the metallo-dependent hydrolases superfamily. PDC hydrolase family.

The enzyme catalyses 2-oxo-2H-pyran-4,6-dicarboxylate + H2O = (1E)-4-oxobut-1-ene-1,2,4-tricarboxylate + H(+). With respect to regulation, strongly inhibited by 1 mM Zn(2+), Cu(2+), Mn(2+) and Co(2+) ions. Also inhibited by 5,5'-dithiobis(2-nitrobenzoic acid) (Ellman reagent) in vitro. Its function is as follows. Involved in the degradation of aromatic compounds via the protocatechuate 4,5-cleavage pathway. Catalyzes the hydrolysis of 2-pyrone-4,6-dicarboxylate (PDC) to oxalomesaconate (OMA). Also catalyzes the reverse reaction. The chain is 2-pyrone-4,6-dicarbaxylate hydrolase from Comamonas testosteroni (Pseudomonas testosteroni).